The chain runs to 194 residues: UPF0215 protein PF2042 (194 aa).

The protein belongs to the UPF0215 family.

This Pyrococcus furiosus (strain ATCC 43587 / DSM 3638 / JCM 8422 / Vc1) protein is UPF0215 protein PF2042.